Here is a 360-residue protein sequence, read N- to C-terminus: Membrane-bound lytic murein transglycosylase C (360 aa).

The first 16 residues, 1–16 (MKKYLALALIAPLLVS), serve as a signal peptide directing secretion. Cys17 carries the N-palmitoyl cysteine lipid modification. Cys17 is lipidated: S-diacylglycerol cysteine.

This sequence belongs to the transglycosylase Slt family.

The protein localises to the cell outer membrane. The catalysed reaction is Exolytic cleavage of the (1-&gt;4)-beta-glycosidic linkage between N-acetylmuramic acid (MurNAc) and N-acetylglucosamine (GlcNAc) residues in peptidoglycan, from either the reducing or the non-reducing ends of the peptidoglycan chains, with concomitant formation of a 1,6-anhydrobond in the MurNAc residue.. Murein-degrading enzyme. May play a role in recycling of muropeptides during cell elongation and/or cell division. This Klebsiella pneumoniae (strain 342) protein is Membrane-bound lytic murein transglycosylase C.